A 275-amino-acid chain; its full sequence is Exosome complex component Rrp42 (275 aa).

Belongs to the RNase PH family. Rrp42 subfamily. As to quaternary structure, component of the archaeal exosome complex. Forms a hexameric ring-like arrangement composed of 3 Rrp41-Rrp42 heterodimers. The hexameric ring associates with a trimer of Rrp4 and/or Csl4 subunits.

Its subcellular location is the cytoplasm. Non-catalytic component of the exosome, which is a complex involved in RNA degradation. Contributes to the structuring of the Rrp41 active site. The sequence is that of Exosome complex component Rrp42 from Saccharolobus islandicus (strain M.16.27) (Sulfolobus islandicus).